The following is a 198-amino-acid chain: Probable molybdenum cofactor guanylyltransferase (198 aa).

Residues 9-11 (LAG), Lys22, Asp66, and Asp95 each bind GTP. A Mg(2+)-binding site is contributed by Asp95.

It belongs to the MobA family. It depends on Mg(2+) as a cofactor.

It localises to the cytoplasm. It catalyses the reaction Mo-molybdopterin + GTP + H(+) = Mo-molybdopterin guanine dinucleotide + diphosphate. Its function is as follows. Transfers a GMP moiety from GTP to Mo-molybdopterin (Mo-MPT) cofactor (Moco or molybdenum cofactor) to form Mo-molybdopterin guanine dinucleotide (Mo-MGD) cofactor. The polypeptide is Probable molybdenum cofactor guanylyltransferase (Clostridium perfringens (strain ATCC 13124 / DSM 756 / JCM 1290 / NCIMB 6125 / NCTC 8237 / Type A)).